A 134-amino-acid chain; its full sequence is Arsenate reductase (134 aa).

Active-site nucleophile residues include C11, C83, and C90. 2 disulfide bridges follow: C11-C83 and C83-C90.

The protein belongs to the low molecular weight phosphotyrosine protein phosphatase family. Thioredoxin-coupled ArsC subfamily.

The protein localises to the cytoplasm. It carries out the reaction arsenate + [thioredoxin]-dithiol + H(+) = arsenite + [thioredoxin]-disulfide + H2O. Functionally, catalyzes the reduction of arsenate [As(V)] to arsenite [As(III)]. This is Arsenate reductase from Bacillus cereus (strain Q1).